The primary structure comprises 1272 residues: AF4/FMR2 family member 2 (1272 aa).

Disordered stretches follow at residues 151-190 (SNRK…DPPQ), 204-231 (PQIG…DTFK), 372-401 (TLQK…EDDL), 422-497 (KAKP…QLDK), 557-694 (IREK…ETLQ), 715-743 (TLST…PAMQ), and 772-899 (PGQN…QDKN). Residues 155-164 (SKSEWPRDSH) show a composition bias toward basic and acidic residues. Positions 165–179 (NTSPAQASQTSSQPN) are enriched in low complexity. The span at 180-189 (KMQTSTQDPP) shows a compositional bias: polar residues. Residues 210-227 (EKSNPSSKEENNPNSGGE) show a composition bias toward low complexity. The segment covering 374–384 (QKWSDPSSRAS) has biased composition (polar residues). Over residues 387–396 (MLEDDLKLSS) the composition is skewed to basic and acidic residues. Position 395 is a phosphoserine (S395). Positions 436–450 (TPQSTPATQTNVGSG) are enriched in polar residues. T482 carries the post-translational modification Phosphothreonine. Over residues 580–590 (STSVDTVSQRT) the composition is skewed to polar residues. The span at 620-633 (PKEKGSVELPDPPR) shows a compositional bias: basic and acidic residues. A compositionally biased stretch (basic residues) spans 634-644 (SRNKATAHKPV). Residues 715-734 (TLSTLTNGNSNNLSTSNEET) show a composition bias toward low complexity. Basic and acidic residues predominate over residues 815-831 (PAETAEKIPEKKQRLED). The segment covering 841–850 (CISPAPPHKP) has biased composition (pro residues). The span at 887–899 (VSGNNGHFGQDKN) shows a compositional bias: polar residues.

It belongs to the AF4 family. As to expression, highly expressed in the hippocampus, the piriform cortex, Purkinje cells and the cingulate gyrus.

It localises to the nucleus speckle. Its function is as follows. RNA-binding protein. Might be involved in alternative splicing regulation through an interaction with G-quartet RNA structure. The chain is AF4/FMR2 family member 2 from Mus musculus (Mouse).